Consider the following 151-residue polypeptide: Ribonuclease H (151 aa).

The RNase H type-1 domain maps to 1–146 (MPDLYAYTDG…ADELARAGMA (146 aa)). Mg(2+) is bound by residues Asp-9, Glu-52, Asp-74, and Asp-138.

This sequence belongs to the RNase H family. As to quaternary structure, monomer. Mg(2+) is required as a cofactor.

It localises to the cytoplasm. The catalysed reaction is Endonucleolytic cleavage to 5'-phosphomonoester.. Endonuclease that specifically degrades the RNA of RNA-DNA hybrids. This chain is Ribonuclease H, found in Cereibacter sphaeroides (strain ATCC 17029 / ATH 2.4.9) (Rhodobacter sphaeroides).